Reading from the N-terminus, the 593-residue chain is MASSTPSPATSSNAGADPNTTNLRPTTYDTWCGVAHGCTRKLGLKICGFLQRTNSLEEKSRLVSAFRERQASKNLLSCENSDPGARFRRTETDFSNLFAQDLLPAKNGEEQTVQFLLEVVDILLNYVRKTFDRSTKVLDFHHPHQLLEGMEGFNLELSDHPESLEQILVDCRDTLKYGVRTGHPRFFNQLSTGLDIIGLAGEWLTSTANTNMFTYEIAPVFVLMEQITLKKMREIIGWSNKDGDGIFSPGGAISNMYSIMAARYKYFPEVKTKGMAAVPKLVLFTSEHSHYSIKKAGAALGFGTDNVILIKCNERGKIIPADLEAKILDAKQKGFVPLYVNATAGTTVYGAFDPIQEIADICEKYNLWLHVDAAWGGGLLMSRKHRHKLSGIERANSVTWNPHKMMGVLLQCSAILVKEKGILQGCNQMCAGYLFQPDKQYDVSYDTGDKAIQCGRHVDIFKFWLMWKAKGTVGFENQINKCLELAEYLYAKIKNREEFEMVFNGEPEHTNVCFWYIPQSLRGVPDSPERREKLHRVAPKIKALMMESGTTMVGYQPQGDKANFFRMVISNPAATQSDIDFLIEEIERLGQDL.

Residues 1–12 (MASSTPSPATSS) show a composition bias toward low complexity. The interval 1–22 (MASSTPSPATSSNAGADPNTTN) is disordered. A Phosphoserine modification is found at serine 77. 189-191 (QLS) contacts 4-aminobutanoate. Lysine 404 is modified (N6-(pyridoxal phosphate)lysine). Position 566 (arginine 566) interacts with 4-aminobutanoate.

Belongs to the group II decarboxylase family. In terms of assembly, homodimer. It depends on pyridoxal 5'-phosphate as a cofactor. In terms of tissue distribution, expressed in brain and pancreatic islets.

The catalysed reaction is L-glutamate + H(+) = 4-aminobutanoate + CO2. In terms of biological role, catalyzes the synthesis of the inhibitory neurotransmitter gamma-aminobutyric acid (GABA) with pyridoxal 5'-phosphate as cofactor. The polypeptide is Glutamate decarboxylase 1 (Gad1) (Rattus norvegicus (Rat)).